The following is a 316-amino-acid chain: MNDVSKASLPKAIFLMGPTASGKTALAIALRKVLPVELISVDSALIYRGMDIGTAKPNADELKAAPHRLLDIRDPSQAYSAADFRRDALAQMAEITAAGRIPLLVGGTMLYFKALLEGLSPLPSADPEVRSRIEQQAAELGWEALHQQLQEIDPVAAARIHPNDPQRLSRALEVFFISGKTLTELTQTSGDALPYQVHQFAIAPASRELLHQRIELRFHQMLASGFEAEVRALFARGDLHTDLPSIRCVGYRQMWSYIEGEISYDEMVYRGVCATRQLAKRQMTWLRGWEGVRWLDSENPDRARKEVLQVVGAIAD.

Residue 17–24 (GPTASGKT) coordinates ATP. Substrate is bound at residue 19–24 (TASGKT). Interaction with substrate tRNA stretches follow at residues 42–45 (DSAL), 166–170 (QRLSR), and 247–252 (RCVGYR).

It belongs to the IPP transferase family. Monomer. The cofactor is Mg(2+).

It carries out the reaction adenosine(37) in tRNA + dimethylallyl diphosphate = N(6)-dimethylallyladenosine(37) in tRNA + diphosphate. Functionally, catalyzes the transfer of a dimethylallyl group onto the adenine at position 37 in tRNAs that read codons beginning with uridine, leading to the formation of N6-(dimethylallyl)adenosine (i(6)A). This Salmonella paratyphi C (strain RKS4594) protein is tRNA dimethylallyltransferase.